The primary structure comprises 163 residues: ATP synthase subunit b 1 (163 aa).

Residues 7–27 form a helical membrane-spanning segment; the sequence is AETWVAVAFVILMALFAYLGV.

The protein belongs to the ATPase B chain family. As to quaternary structure, F-type ATPases have 2 components, F(1) - the catalytic core - and F(0) - the membrane proton channel. F(1) has five subunits: alpha(3), beta(3), gamma(1), delta(1), epsilon(1). F(0) has three main subunits: a(1), b(2) and c(10-14). The alpha and beta chains form an alternating ring which encloses part of the gamma chain. F(1) is attached to F(0) by a central stalk formed by the gamma and epsilon chains, while a peripheral stalk is formed by the delta and b chains.

Its subcellular location is the cell inner membrane. F(1)F(0) ATP synthase produces ATP from ADP in the presence of a proton or sodium gradient. F-type ATPases consist of two structural domains, F(1) containing the extramembraneous catalytic core and F(0) containing the membrane proton channel, linked together by a central stalk and a peripheral stalk. During catalysis, ATP synthesis in the catalytic domain of F(1) is coupled via a rotary mechanism of the central stalk subunits to proton translocation. In terms of biological role, component of the F(0) channel, it forms part of the peripheral stalk, linking F(1) to F(0). The sequence is that of ATP synthase subunit b 1 from Rhodopseudomonas palustris (strain BisB5).